The sequence spans 264 residues: Thymidylate synthase (264 aa).

R21 contacts dUMP. H51 is a binding site for (6R)-5,10-methylene-5,6,7,8-tetrahydrofolate. 126–127 (RR) provides a ligand contact to dUMP. C146 acts as the Nucleophile in catalysis. DUMP is bound by residues 166-169 (RSCD), N177, and 207-209 (HLY). D169 lines the (6R)-5,10-methylene-5,6,7,8-tetrahydrofolate pocket. (6R)-5,10-methylene-5,6,7,8-tetrahydrofolate is bound at residue A263.

It belongs to the thymidylate synthase family. Bacterial-type ThyA subfamily. In terms of assembly, homodimer.

It is found in the cytoplasm. It carries out the reaction dUMP + (6R)-5,10-methylene-5,6,7,8-tetrahydrofolate = 7,8-dihydrofolate + dTMP. It functions in the pathway pyrimidine metabolism; dTTP biosynthesis. In terms of biological role, catalyzes the reductive methylation of 2'-deoxyuridine-5'-monophosphate (dUMP) to 2'-deoxythymidine-5'-monophosphate (dTMP) while utilizing 5,10-methylenetetrahydrofolate (mTHF) as the methyl donor and reductant in the reaction, yielding dihydrofolate (DHF) as a by-product. This enzymatic reaction provides an intracellular de novo source of dTMP, an essential precursor for DNA biosynthesis. The chain is Thymidylate synthase from Salmonella typhimurium (strain LT2 / SGSC1412 / ATCC 700720).